Reading from the N-terminus, the 156-residue chain is Large ribosomal subunit protein uL15 (156 aa).

Residues 1 to 16 (MVRRFKRGTKYRRGSR) show a composition bias toward basic residues. A disordered region spans residues 1–37 (MVRRFKRGTKYRRGSRTHGWGRVGQHRKSGGSGGKGM).

It belongs to the universal ribosomal protein uL15 family. As to quaternary structure, part of the 50S ribosomal subunit.

Binds to the 23S rRNA. This chain is Large ribosomal subunit protein uL15, found in Pyrobaculum aerophilum (strain ATCC 51768 / DSM 7523 / JCM 9630 / CIP 104966 / NBRC 100827 / IM2).